The primary structure comprises 113 residues: Nucleoid-associated protein FMG_0513 (113 aa).

Residues 1–44 form a disordered region; sequence MGNKFRGGMPGMGNMGNMMKQMQKMQRQMEETQKRLEETEVTAT. Residues 15 to 26 show a composition bias toward low complexity; the sequence is MGNMMKQMQKMQ. Residues 27–38 show a composition bias toward basic and acidic residues; sequence RQMEETQKRLEE.

This sequence belongs to the YbaB/EbfC family. Homodimer.

It localises to the cytoplasm. Its subcellular location is the nucleoid. Binds to DNA and alters its conformation. May be involved in regulation of gene expression, nucleoid organization and DNA protection. The chain is Nucleoid-associated protein FMG_0513 from Finegoldia magna (strain ATCC 29328 / DSM 20472 / WAL 2508) (Peptostreptococcus magnus).